The primary structure comprises 261 residues: Cytochrome c oxidase subunit 3 (261 aa).

The Mitochondrial matrix portion of the chain corresponds to 1–15 (MTHQSHAYHMVKPSP). The helical transmembrane segment at 16 to 34 (WPLTGALSALLMTSGLAMW) threads the bilayer. At 35 to 40 (FHFYST) the chain is on the mitochondrial intermembrane side. The chain crosses the membrane as a helical span at residues 41–66 (TLLTLGLLTNTLTMYQWWRDVMREGT). Over 67-72 (YQGHHT) the chain is Mitochondrial matrix. A helical transmembrane segment spans residues 73 to 105 (PPVQKGLRYGMILFITSEVFFFAGFFWAFYHSS). At 106–128 (LAPTPQLGGHWPPTGITPLNPLE) the chain is on the mitochondrial intermembrane side. Residues 129-152 (VPLLNTSVLLASGVSITWAHHSLM) form a helical membrane-spanning segment. Over 153-155 (ENN) the chain is Mitochondrial matrix. Residues 156–183 (RNQMIQALLITILLGLYFTLLQASEYFE) traverse the membrane as a helical segment. The Mitochondrial intermembrane portion of the chain corresponds to 184–190 (SPFTISD). A helical transmembrane segment spans residues 191–223 (GIYGSTFFVATGFHGLHVIIGSTFLTICLIRQL). Residues 224-232 (MFHFTSKHH) are Mitochondrial matrix-facing. A helical transmembrane segment spans residues 233-256 (FGFQAAAWYWHFVDVVWLFLYVSI). At 257 to 261 (YWWGS) the chain is on the mitochondrial intermembrane side.

Belongs to the cytochrome c oxidase subunit 3 family. As to quaternary structure, component of the cytochrome c oxidase (complex IV, CIV), a multisubunit enzyme composed of 14 subunits. The complex is composed of a catalytic core of 3 subunits MT-CO1, MT-CO2 and MT-CO3, encoded in the mitochondrial DNA, and 11 supernumerary subunits COX4I, COX5A, COX5B, COX6A, COX6B, COX6C, COX7A, COX7B, COX7C, COX8 and NDUFA4, which are encoded in the nuclear genome. The complex exists as a monomer or a dimer and forms supercomplexes (SCs) in the inner mitochondrial membrane with NADH-ubiquinone oxidoreductase (complex I, CI) and ubiquinol-cytochrome c oxidoreductase (cytochrome b-c1 complex, complex III, CIII), resulting in different assemblies (supercomplex SCI(1)III(2)IV(1) and megacomplex MCI(2)III(2)IV(2)).

It is found in the mitochondrion inner membrane. The enzyme catalyses 4 Fe(II)-[cytochrome c] + O2 + 8 H(+)(in) = 4 Fe(III)-[cytochrome c] + 2 H2O + 4 H(+)(out). Its function is as follows. Component of the cytochrome c oxidase, the last enzyme in the mitochondrial electron transport chain which drives oxidative phosphorylation. The respiratory chain contains 3 multisubunit complexes succinate dehydrogenase (complex II, CII), ubiquinol-cytochrome c oxidoreductase (cytochrome b-c1 complex, complex III, CIII) and cytochrome c oxidase (complex IV, CIV), that cooperate to transfer electrons derived from NADH and succinate to molecular oxygen, creating an electrochemical gradient over the inner membrane that drives transmembrane transport and the ATP synthase. Cytochrome c oxidase is the component of the respiratory chain that catalyzes the reduction of oxygen to water. Electrons originating from reduced cytochrome c in the intermembrane space (IMS) are transferred via the dinuclear copper A center (CU(A)) of subunit 2 and heme A of subunit 1 to the active site in subunit 1, a binuclear center (BNC) formed by heme A3 and copper B (CU(B)). The BNC reduces molecular oxygen to 2 water molecules using 4 electrons from cytochrome c in the IMS and 4 protons from the mitochondrial matrix. The protein is Cytochrome c oxidase subunit 3 (MT-CO3) of Pan troglodytes (Chimpanzee).